The sequence spans 217 residues: Outer-membrane lipoprotein LolB (217 aa).

The first 20 residues, 1–20 (MSRAVRTLALGGLVLVGLSA), serve as a signal peptide directing secretion. Cys-21 carries the N-palmitoyl cysteine lipid modification. Cys-21 carries the S-diacylglycerol cysteine lipid modification.

It belongs to the LolB family. As to quaternary structure, monomer.

Its subcellular location is the cell outer membrane. Its function is as follows. Plays a critical role in the incorporation of lipoproteins in the outer membrane after they are released by the LolA protein. The protein is Outer-membrane lipoprotein LolB of Xanthomonas euvesicatoria pv. vesicatoria (strain 85-10) (Xanthomonas campestris pv. vesicatoria).